Here is a 343-residue protein sequence, read N- to C-terminus: Phosphate acyltransferase (343 aa).

Belongs to the PlsX family. Homodimer. Probably interacts with PlsY.

The protein resides in the cytoplasm. It catalyses the reaction a fatty acyl-[ACP] + phosphate = an acyl phosphate + holo-[ACP]. It participates in lipid metabolism; phospholipid metabolism. Functionally, catalyzes the reversible formation of acyl-phosphate (acyl-PO(4)) from acyl-[acyl-carrier-protein] (acyl-ACP). This enzyme utilizes acyl-ACP as fatty acyl donor, but not acyl-CoA. The protein is Phosphate acyltransferase of Haemophilus ducreyi (strain 35000HP / ATCC 700724).